A 754-amino-acid polypeptide reads, in one-letter code: 17S U2 SnRNP complex component HTATSF1 (754 aa).

2 disordered regions span residues Met1–Asp53 and Gly81–Ser122. N-acetylserine is present on Ser2. Residues Glu90 to Ser122 show a composition bias toward basic and acidic residues. 2 RRM domains span residues Thr133–Phe218 and Arg264–Gly349. A U2AF homology motif (UHM) region spans residues Arg259–Tyr353. At Lys297 the chain carries N6-acetyllysine. A disordered region spans residues Arg380 to Glu415. The segment at Gly381–Ile754 is mediates interaction with the P-TEFb complex. Phosphoserine occurs at positions 387, 403, 407, and 409. Residues His405–Glu415 are compositionally biased toward polar residues. Residues Lys429 and Lys430 each participate in a glycyl lysine isopeptide (Lys-Gly) (interchain with G-Cter in SUMO2) cross-link. The interval Lys433–Ile754 is disordered. Ser445, Ser452, and Ser453 each carry phosphoserine. Residues Cys462–Phe476 are compositionally biased toward basic and acidic residues. A phosphoserine mark is found at Ser481, Ser485, Ser494, Ser498, Ser521, and Ser529. Over residues Leu508 to Glu538 the composition is skewed to basic and acidic residues. Positions Ser539–Cys552 are enriched in acidic residues. The segment covering Ser553–Arg563 has biased composition (basic and acidic residues). Ser557, Ser561, and Ser579 each carry phosphoserine. Over residues Glu564–Ser579 the composition is skewed to acidic residues. Residues Glu580–Lys590 are compositionally biased toward basic and acidic residues. The segment covering Glu591–Gly606 has biased composition (acidic residues). Phosphoserine is present on residues Ser597, Ser600, Ser607, Ser616, and Ser624. Composition is skewed to acidic residues over residues Glu613–Thr633 and Asp640–Ala651. Residue Thr633 is modified to Phosphothreonine. At Ser642 the chain carries Phosphoserine. The segment covering Asp652 to Glu674 has biased composition (basic and acidic residues). Residues Glu675–Ser713 are compositionally biased toward acidic residues. 5 positions are modified to phosphoserine: Ser676, Ser702, Ser713, Ser721, and Ser748. Residues Asn714–Gly725 show a composition bias toward basic and acidic residues.

It belongs to the HTATSF1 family. In terms of assembly, component of the 17S U2 SnRNP complex, a ribonucleoprotein complex that contains small nuclear RNA (snRNA) U2 and a number of specific proteins. Within the 17S U2 SnRNP complex, interacts (via UHM region) directly with SF3B1. Component of a complex which is at least composed of HTATSF1/Tat-SF1, the P-TEFb complex components CDK9 and CCNT1, RNA polymerase II, SUPT5H, and NCL/nucleolin. Interacts with GTF2F2/RAP30 and POLR2A. Interacts with TCERG1/CA150. Interacts with (poly-ADP-ribosylated) RPA1; promoting HTATSF1 recruitment to DNA damage sites. Interacts (when phosphorylated) with TOPBP1; promoting recruitment of TOPBP1 to DNA damage sites during S-phase. In terms of processing, phosphorylation at Ser-748 by CK2 during S-phase in response to DNA damage promotes interaction with TOPBP1 and double-strand break (DSB) repair via homologous recombination.

The protein resides in the nucleus. The protein localises to the chromosome. Its function is as follows. Component of the 17S U2 SnRNP complex of the spliceosome, a large ribonucleoprotein complex that removes introns from transcribed pre-mRNAs. The 17S U2 SnRNP complex (1) directly participates in early spliceosome assembly and (2) mediates recognition of the intron branch site during pre-mRNA splicing by promoting the selection of the pre-mRNA branch-site adenosine, the nucleophile for the first step of splicing. Within the 17S U2 SnRNP complex, HTATSF1 is required to stabilize the branchpoint-interacting stem loop. HTATSF1 is displaced from the 17S U2 SnRNP complex before the stable addition of the 17S U2 SnRNP complex to the spliceosome, destabilizing the branchpoint-interacting stem loop and allowing to probe intron branch site sequences. Also acts as a regulator of transcriptional elongation, possibly by mediating the reciprocal stimulatory effect of splicing on transcriptional elongation. Involved in double-strand break (DSB) repair via homologous recombination in S-phase by promoting the recruitment of TOPBP1 to DNA damage sites. Mechanistically, HTATSF1 is (1) recruited to DNA damage sites in S-phase via interaction with poly-ADP-ribosylated RPA1 and (2) phosphorylated by CK2, promoting recruitment of TOPBP1, thereby facilitating RAD51 nucleofilaments formation and RPA displacement, followed by homologous recombination. The protein is 17S U2 SnRNP complex component HTATSF1 (HTATSF1) of Pongo abelii (Sumatran orangutan).